The following is a 172-amino-acid chain: 3-hydroxydecanoyl-[acyl-carrier-protein] dehydratase (172 aa).

Residue His-71 is part of the active site.

It belongs to the thioester dehydratase family. FabA subfamily. As to quaternary structure, homodimer.

Its subcellular location is the cytoplasm. It carries out the reaction a (3R)-hydroxyacyl-[ACP] = a (2E)-enoyl-[ACP] + H2O. The enzyme catalyses (3R)-hydroxydecanoyl-[ACP] = (2E)-decenoyl-[ACP] + H2O. It catalyses the reaction (2E)-decenoyl-[ACP] = (3Z)-decenoyl-[ACP]. It functions in the pathway lipid metabolism; fatty acid biosynthesis. Its function is as follows. Necessary for the introduction of cis unsaturation into fatty acids. Catalyzes the dehydration of (3R)-3-hydroxydecanoyl-ACP to E-(2)-decenoyl-ACP and then its isomerization to Z-(3)-decenoyl-ACP. Can catalyze the dehydratase reaction for beta-hydroxyacyl-ACPs with saturated chain lengths up to 16:0, being most active on intermediate chain length. The sequence is that of 3-hydroxydecanoyl-[acyl-carrier-protein] dehydratase from Yersinia enterocolitica serotype O:8 / biotype 1B (strain NCTC 13174 / 8081).